We begin with the raw amino-acid sequence, 365 residues long: Protein RecA (365 aa).

73-80 is a binding site for ATP; that stretch reads GPESSGKT.

This sequence belongs to the RecA family.

It is found in the cytoplasm. In terms of biological role, can catalyze the hydrolysis of ATP in the presence of single-stranded DNA, the ATP-dependent uptake of single-stranded DNA by duplex DNA, and the ATP-dependent hybridization of homologous single-stranded DNAs. It interacts with LexA causing its activation and leading to its autocatalytic cleavage. This chain is Protein RecA, found in Prochlorococcus marinus (strain MIT 9312).